A 386-amino-acid chain; its full sequence is Sulfate adenylyltransferase (386 aa).

This sequence belongs to the sulfate adenylyltransferase family.

The catalysed reaction is sulfate + ATP + H(+) = adenosine 5'-phosphosulfate + diphosphate. The protein operates within sulfur metabolism; hydrogen sulfide biosynthesis; sulfite from sulfate: step 1/3. The chain is Sulfate adenylyltransferase from Persephonella marina (strain DSM 14350 / EX-H1).